The chain runs to 395 residues: MAKAKFERSKPHVNIGTIGHVDHGKTTLTAAITTVLAKAGGAEARGYDQIDAAPEERERGITISTAHVEYETETRHYAHVDCPGHADYVKNMITGAAQMDGGILVVSAADGPMPQTREHILLSRQVGVPYIVVFLNKCDMVDDEELLELVEMEVRDLLSEYGFPGDDIPVIKGSALKALQGEADWEAKIIELMAEVDAYIPTPERETDKPFLMPVEDVFSITGRGTVATGRVERGIVKVGDVVEIIGLAEENASTTVTGVEMFRKLLDQAQAGDNIGALLRGVAREDIQRGQVLAKSGSVKAHAKFKAEVFVLSKEEGGRHTPFFANYRPQFYFRTTDVTGIIQLPEGTEMVMPGDNIEMTIELIAPIAIEEGTKFSIREGGRTVGYGVVATIVE.

Residues 10 to 204 (KPHVNIGTIG…EVDAYIPTPE (195 aa)) enclose the tr-type G domain. Residues 19–26 (GHVDHGKT) form a G1 region. 19 to 26 (GHVDHGKT) serves as a coordination point for GTP. Thr26 is a binding site for Mg(2+). The G2 stretch occupies residues 60 to 64 (GITIS). Positions 81-84 (DCPG) are G3. Residues 81–85 (DCPGH) and 136–139 (NKCD) each bind GTP. Positions 136-139 (NKCD) are G4. The interval 174-176 (SAL) is G5.

It belongs to the TRAFAC class translation factor GTPase superfamily. Classic translation factor GTPase family. EF-Tu/EF-1A subfamily. As to quaternary structure, monomer.

It is found in the cytoplasm. The catalysed reaction is GTP + H2O = GDP + phosphate + H(+). In terms of biological role, GTP hydrolase that promotes the GTP-dependent binding of aminoacyl-tRNA to the A-site of ribosomes during protein biosynthesis. The sequence is that of Elongation factor Tu from Bacillus anthracis (strain A0248).